The chain runs to 212 residues: HTH-type transcriptional repressor NicS (212 aa).

The HTH tetR-type domain occupies 14–74 (DRTRDNILKA…SVLEHIYASF (61 aa)). The segment at residues 37-56 (RIEQISTLAKSNDRMIYYYF) is a DNA-binding region (H-T-H motif).

The protein operates within cofactor degradation; nicotinate degradation [regulation]. Functionally, transcriptional repressor for the nicAB operon, encoding the upper aerobic nicotinate degradation pathway. Acts under non-induced conditions: repression of the nicAB operon becomes alleviated in presence of either nicotinate or 6-hydroxynicotinate (6HNA). The protein is HTH-type transcriptional repressor NicS (nicS) of Pseudomonas putida (strain ATCC 47054 / DSM 6125 / CFBP 8728 / NCIMB 11950 / KT2440).